The following is a 299-amino-acid chain: RGG repeats nuclear RNA binding protein A (299 aa).

Positions 1–21 (RGGGRGGPRGGGRGRGPGRGR) are enriched in gly residues. Disordered stretches follow at residues 1-173 (RGGG…KEMT) and 232-299 (EAVE…LVAK). Positions 45–60 (RVQEDGESGKLSERRG) are enriched in basic and acidic residues. Positions 61-78 (GYGGPRGGFHGGRRGGFN) are enriched in gly residues. Composition is skewed to basic and acidic residues over residues 86 to 98 (EGERPRRVFDRRS) and 134 to 146 (DGEKIVEAEKEAG). The Arginine-rich RNA-binding motif E-R-P-R-R-X-[F/Y]-[E/D]-R-R-S motif lies at 88-98 (ERPRRVFDRRS). The span at 267–278 (RGRGGFGGGVGG) shows a compositional bias: gly residues.

This sequence belongs to the SERBP1-HABP4 family. In terms of tissue distribution, expressed in seedlings but not in roots.

Its subcellular location is the nucleus. The protein resides in the cytoplasm. It localises to the perinuclear region. Ribosome-binding protein that acts as a regulator of mRNA translation by promoting ribosome inactivation. Binds RNA. This is RGG repeats nuclear RNA binding protein A from Nicotiana tabacum (Common tobacco).